The sequence spans 81 residues: Sec-independent protein translocase protein TatA (81 aa).

The helical transmembrane segment at methionine 1 to glycine 21 threads the bilayer. Basic and acidic residues predominate over residues methionine 46–lysine 56. Residues methionine 46–alanine 81 are disordered.

The protein belongs to the TatA/E family. As to quaternary structure, the Tat system comprises two distinct complexes: a TatABC complex, containing multiple copies of TatA, TatB and TatC subunits, and a separate TatA complex, containing only TatA subunits. Substrates initially bind to the TatABC complex, which probably triggers association of the separate TatA complex to form the active translocon.

It is found in the cell membrane. Part of the twin-arginine translocation (Tat) system that transports large folded proteins containing a characteristic twin-arginine motif in their signal peptide across membranes. TatA could form the protein-conducting channel of the Tat system. This Mycolicibacterium smegmatis (strain ATCC 700084 / mc(2)155) (Mycobacterium smegmatis) protein is Sec-independent protein translocase protein TatA.